The following is a 196-amino-acid chain: MTENSAAAPAGKPKRSKASKKATDHPKYSDMILAAVQAEKSRSGSSRQSIQKYIKNHYKVGENADSQIKLSIKRLVTSGTLKQTKGVGASGSFRLAKADEGKKPAKKPKKEIKKAASPKKAAKPKKAAKSPAKAKKPKVAEKKVKKPAKKKPAPSPKKAKKTKTVKAKPVRASRVKKAKPSKPKAKASPKKSGRKK.

Disordered regions lie at residues 1 to 29 and 78 to 196; these read MTEN…PKYS and SGTL…GRKK. The 74-residue stretch at 24–97 folds into the H15 domain; sequence DHPKYSDMIL…GASGSFRLAK (74 aa). Positions 104 to 196 are enriched in basic residues; the sequence is PAKKPKKEIK…ASPKKSGRKK (93 aa).

It belongs to the histone H1/H5 family.

The protein resides in the nucleus. The protein localises to the chromosome. In terms of biological role, histones H1 are necessary for the condensation of nucleosome chains into higher-order structures. The histones H1.0 are found in cells that are in terminal stages of differentiation or that have low rates of cell division. This is Histone H1.0 (h1-0) from Xenopus tropicalis (Western clawed frog).